The sequence spans 207 residues: Small ribosomal subunit protein uS4 (207 aa).

The tract at residues 26–47 is disordered; the sequence is AINNKNYKPGQQGNSSSISKPS. Polar residues predominate over residues 28 to 39; it reads NNKNYKPGQQGN. The S4 RNA-binding domain occupies 95 to 158; it reads RRLDAVVYRL…KQIPIVIGAI (64 aa).

It belongs to the universal ribosomal protein uS4 family. Part of the 30S ribosomal subunit. Contacts protein S5. The interaction surface between S4 and S5 is involved in control of translational fidelity.

Functionally, one of the primary rRNA binding proteins, it binds directly to 16S rRNA where it nucleates assembly of the body of the 30S subunit. Its function is as follows. With S5 and S12 plays an important role in translational accuracy. The chain is Small ribosomal subunit protein uS4 from Orientia tsutsugamushi (strain Boryong) (Rickettsia tsutsugamushi).